The chain runs to 459 residues: Argininosuccinate lyase (459 aa).

The protein belongs to the lyase 1 family. Argininosuccinate lyase subfamily.

It localises to the cytoplasm. The enzyme catalyses 2-(N(omega)-L-arginino)succinate = fumarate + L-arginine. It functions in the pathway amino-acid biosynthesis; L-arginine biosynthesis; L-arginine from L-ornithine and carbamoyl phosphate: step 3/3. The sequence is that of Argininosuccinate lyase from Geobacillus sp. (strain WCH70).